A 255-amino-acid chain; its full sequence is MPLAKRIIPCLDVCNGRVVKGTKFVDIKDAGDPVEVAKRYDFECADEITFLDITASIEGRDTMIHMVEAIAEQVFIPLTVGGGIRKAVDVRAMLNAGADKVAINSAAIFNPNLINQLSEEFGSQCIVIAIDAKKVSDNKWEIFTHGGRKSTGIDAIEWAVKMTKGDNGAGEVLLTSMDCDGVKTGFDLLLTKAASDAVDVPIIASGGVGNLEHLSEGVLQGGADAVLAASIFHFGEYTIQQAKQAMQENGIEVRL.

Residues D12 and D131 contribute to the active site.

It belongs to the HisA/HisF family. In terms of assembly, heterodimer of HisH and HisF.

It is found in the cytoplasm. The catalysed reaction is 5-[(5-phospho-1-deoxy-D-ribulos-1-ylimino)methylamino]-1-(5-phospho-beta-D-ribosyl)imidazole-4-carboxamide + L-glutamine = D-erythro-1-(imidazol-4-yl)glycerol 3-phosphate + 5-amino-1-(5-phospho-beta-D-ribosyl)imidazole-4-carboxamide + L-glutamate + H(+). It functions in the pathway amino-acid biosynthesis; L-histidine biosynthesis; L-histidine from 5-phospho-alpha-D-ribose 1-diphosphate: step 5/9. Functionally, IGPS catalyzes the conversion of PRFAR and glutamine to IGP, AICAR and glutamate. The HisF subunit catalyzes the cyclization activity that produces IGP and AICAR from PRFAR using the ammonia provided by the HisH subunit. The polypeptide is Imidazole glycerol phosphate synthase subunit HisF (Ruthia magnifica subsp. Calyptogena magnifica).